Consider the following 788-residue polypeptide: Serine/threonine-protein kinase MARK2 (788 aa).

A disordered region spans residues 1 to 46 (MSSARTPLPTLNERDTEQPTLGHLDSKPSSKSNMIRGRNSATSADE). The segment covering 27–45 (KPSSKSNMIRGRNSATSAD) has biased composition (polar residues). At Ser40 the chain carries Phosphoserine. The Protein kinase domain maps to 53 to 304 (YRLLKTIGKG…LEQIMKDRWM (252 aa)). Position 58 is a phosphothreonine; by autocatalysis (Thr58). ATP contacts are provided by residues 59 to 67 (IGKGNFAKV) and Lys82. A phosphoserine; by CaMK1 mark is found at Ser91, Ser92, and Ser93. Asp175 serves as the catalytic Proton acceptor. The residue at position 208 (Thr208) is a Phosphothreonine; by LKB1 and TAOK1. The residue at position 212 (Ser212) is a Phosphoserine; by GSK3-beta. Ser274 carries the phosphoserine; by autocatalysis modification. Thr275 is modified (phosphothreonine; by autocatalysis). The residue at position 294 (Thr294) is a Phosphothreonine; by CaMK1. The UBA domain occupies 323–362 (YKDPRRTELMVSMGYTREEIQDSLVGQRYNEVMATYLLLG). The interval 373 to 632 (ITLKPRPSAD…HSQGRRGASG (260 aa)) is disordered. Lys376 and Ser409 each carry phosphoserine. The span at 418-432 (PTSNSYSKKTQSNNA) shows a compositional bias: polar residues. Over residues 433–445 (ENKRPEEDRESGR) the composition is skewed to basic and acidic residues. Ser456 is subject to Phosphoserine. At Thr467 the chain carries Phosphothreonine. Residues 467–486 (TPTPSTNSVLSTSTNRSRNS) are compositionally biased toward polar residues. Phosphoserine is present on residues Ser486 and Ser493. Over residues 495-504 (GQASIQNGKD) the composition is skewed to polar residues. Over residues 511–525 (SRASTASASAAVSAA) the composition is skewed to low complexity. 3 positions are modified to phosphoserine: Ser569, Ser571, and Ser592. Position 596 is a phosphothreonine; by PKC/PRKCZ (Thr596). Phosphoserine occurs at positions 619 and 722. Positions 739–788 (TPGHEDFVQWEMEVCKLPRLSLNGVRFKRISGTSMAFKNIASKIANELKL) constitute a KA1 domain.

The protein belongs to the protein kinase superfamily. CAMK Ser/Thr protein kinase family. SNF1 subfamily. In terms of assembly, homodimer. Interacts with PAK5; leading to inhibit the protein kinase activity. Interacts with MAPT/TAU. Interacts with MTCL1 isoform 1; the interaction is direct and increases MARK2 microtubule-binding ability. Interacts (when phosphorylated at Thr-596) with YWHAZ. Interacts with YWHAB, YWHAG and YWHAQ. (Microbial infection) In case of infection, interacts with H.pylori CagA, leading to inhibit kinase activity and junctional and polarity defects. It depends on Mg(2+) as a cofactor. Post-translationally, autophosphorylated. Phosphorylated at Thr-208 by STK11/LKB1 in complex with STE20-related adapter-alpha (STRADA) pseudo kinase and CAB39. Phosphorylation at Thr-208 by TAOK1 activates the kinase activity, leading to phosphorylation and detachment of MAPT/TAU from microtubules. Phosphorylation at Ser-212 by GSK3-beta (GSK3B) inhibits the kinase activity. Phosphorylation by CaMK1 promotes activity and is required to promote neurite outgrowth. Phosphorylation at Thr-596 by PRKCZ/aPKC in polarized epithelial cells inhibits the kinase activity and promotes binding to 14-3-3 protein YWHAZ, leading to relocation from cell membrane to cytoplasm. As to expression, high levels of expression in heart, brain, skeletal muscle and pancreas, lower levels observed in lung, liver and kidney.

Its subcellular location is the cell membrane. It localises to the cytoplasm. The protein localises to the lateral cell membrane. The protein resides in the cytoskeleton. It is found in the cell projection. Its subcellular location is the dendrite. The catalysed reaction is L-seryl-[protein] + ATP = O-phospho-L-seryl-[protein] + ADP + H(+). It catalyses the reaction L-threonyl-[protein] + ATP = O-phospho-L-threonyl-[protein] + ADP + H(+). The enzyme catalyses L-seryl-[tau protein] + ATP = O-phospho-L-seryl-[tau protein] + ADP + H(+). It carries out the reaction L-threonyl-[tau protein] + ATP = O-phospho-L-threonyl-[tau protein] + ADP + H(+). With respect to regulation, inhibited by PAK5; inhibition is independent of the kinase activity of PAK5. Activated by phosphorylation on Thr-208. Inhibited by phosphorylation at Ser-212 and Thr-596. Inhibited by hymenialdisine. Specifically inhibited by the H.pylori CagA peptide FPLKRHDKVDDLSK that mimics host substrates and binds to the kinase substrate-binding site. Its function is as follows. Serine/threonine-protein kinase. Involved in cell polarity and microtubule dynamics regulation. Phosphorylates CRTC2/TORC2, DCX, HDAC7, KIF13B, MAP2, MAP4 and RAB11FIP2. Phosphorylates the microtubule-associated protein MAPT/TAU. Plays a key role in cell polarity by phosphorylating the microtubule-associated proteins MAP2, MAP4 and MAPT/TAU at KXGS motifs, causing detachment from microtubules, and their disassembly. Regulates epithelial cell polarity by phosphorylating RAB11FIP2. Involved in the regulation of neuronal migration through its dual activities in regulating cellular polarity and microtubule dynamics, possibly by phosphorylating and regulating DCX. Regulates axogenesis by phosphorylating KIF13B, promoting interaction between KIF13B and 14-3-3 and inhibiting microtubule-dependent accumulation of KIF13B. Also required for neurite outgrowth and establishment of neuronal polarity. Regulates localization and activity of some histone deacetylases by mediating phosphorylation of HDAC7, promoting subsequent interaction between HDAC7 and 14-3-3 and export from the nucleus. Also acts as a positive regulator of the Wnt signaling pathway, probably by mediating phosphorylation of dishevelled proteins (DVL1, DVL2 and/or DVL3). Modulates the developmental decision to build a columnar versus a hepatic epithelial cell apparently by promoting a switch from a direct to a transcytotic mode of apical protein delivery. Essential for the asymmetric development of membrane domains of polarized epithelial cells. This Homo sapiens (Human) protein is Serine/threonine-protein kinase MARK2.